Consider the following 543-residue polypeptide: Germacrene A synthase (543 aa).

4 residues coordinate Mg(2+): Asp-296, Asp-300, Asp-439, and Glu-447. A DDXXD motif motif is present at residues 296–300; that stretch reads DDTYD.

It belongs to the terpene synthase family. Tpsa subfamily. The cofactor is Mg(2+). Mn(2+) serves as cofactor. As to expression, barely detectable in leaves.

It localises to the plastid. The protein localises to the chloroplast. It catalyses the reaction (2E,6E)-farnesyl diphosphate = germacrene A + diphosphate. The enzyme catalyses (2E,6E)-farnesyl diphosphate = (1S,2S,4R)-beta-elemene + diphosphate. It participates in secondary metabolite biosynthesis; terpenoid biosynthesis. In terms of biological role, sesquiterpene synthase involved in the biosynthesis of volatile compounds widely used in aromatherapy and folk medicine, and present in culinary herbs. Mediates the conversion of (2E,6E)-farnesyl diphosphate (FPP) into germacrene A and beta-elemene. Not able to use (2E)-geranyl diphosphate (GPP) as substrate. In Lavandula viridis (Green lavender), this protein is Germacrene A synthase.